Reading from the N-terminus, the 803-residue chain is Volume-regulated anion channel subunit LRRC8B (803 aa).

At 1-25 the chain is on the cytoplasmic side; sequence MITLTELKCLADAQSSYHILKPWWD. The chain crosses the membrane as a helical span at residues 26–46; the sequence is VFWYYITLIMLLVAVLAGALQ. Over 47–119 the chain is Extracellular; it reads LTQSRVLCCL…YEKQLHWFAK (73 aa). 2 cysteine pairs are disulfide-bonded: Cys-55–Cys-304 and Cys-109–Cys-289. N-linked (GlcNAc...) asparagine glycosylation is present at Asn-78. A helical membrane pass occupies residues 120-140; that stretch reads FFPYLVLLHTLIFAACSNFWL. At 141–261 the chain is on the cytoplasmic side; it reads HYPSTSSRLE…DIIYRVYLKQ (121 aa). A phosphoserine mark is found at Ser-186 and Ser-196. The chain crosses the membrane as a helical span at residues 262–282; it reads IIVKVILFVLIITYVPYFLTH. At 283 to 307 the chain is on the extracellular side; sequence ITLEIDCSVDVQAFTGYKRYQCVYS. A helical membrane pass occupies residues 308-328; sequence LAEIFKVLASFYVILVILYGL. At 329 to 803 the chain is on the cytoplasmic side; it reads TSSYSLWWML…ERLQTCLDKC (475 aa). LRR repeat units follow at residues 464-486, 488-509, 511-532, 539-559, 562-582, 586-607, 609-630, 634-655, 657-678, 680-701, 703-724, 726-747, and 749-771; these read NLKE…AFLE, NLKI…VFHL, NLKE…MQLE, NLRT…VTDL, SLQK…NNLK, NLKS…IFSL, NLHE…ISFQ, NLSC…IGAL, NLEQ…LFLC, KLHY…IQYL, NLQY…LFQC, KLQC…VGEL, and NLTH…EGCQ.

It belongs to the LRRC8 family. As to quaternary structure, heterohexamer; oligomerizes with other LRRC8 proteins (LRRC8A, LRRC8C, LRRC8D and/or LRRC8E) to form a heterohexamer. In vivo, the subunit composition may depend primarily on expression levels, and heterooligomeric channels containing various proportions of the different LRRC8 proteins may coexist.

The protein resides in the cell membrane. It is found in the endoplasmic reticulum membrane. The catalysed reaction is chloride(in) = chloride(out). It catalyses the reaction iodide(out) = iodide(in). It carries out the reaction taurine(out) = taurine(in). Functionally, non-essential component of the volume-regulated anion channel (VRAC, also named VSOAC channel), an anion channel required to maintain a constant cell volume in response to extracellular or intracellular osmotic changes. The VRAC channel conducts iodide better than chloride and can also conduct organic osmolytes like taurine. Channel activity requires LRRC8A plus at least one other family member (LRRC8B, LRRC8C, LRRC8D or LRRC8E); channel characteristics depend on the precise subunit composition. The sequence is that of Volume-regulated anion channel subunit LRRC8B from Homo sapiens (Human).